The following is a 169-amino-acid chain: Lutropin/choriogonadotropin subunit beta (169 aa).

The first 20 residues, 1–20 (METLQGLLLWMLLSVGGVWA), serve as a signal peptide directing secretion. Cystine bridges form between Cys-29-Cys-77, Cys-43-Cys-92, Cys-46-Cys-130, Cys-54-Cys-108, Cys-58-Cys-110, and Cys-113-Cys-120. A glycan (N-linked (GlcNAc...) asparagine) is linked at Asn-33. Positions 131-169 (APQASSSSKDPPSQPLTSTSTPTPGASRRSSHPLPIKTS) are disordered. O-linked (GalNAc...) serine glycans are attached at residues Ser-138 and Ser-143. Over residues 145–158 (PLTSTSTPTPGASR) the composition is skewed to low complexity. O-linked (GalNAc...) threonine glycosylation is present at Thr-147. O-linked (GalNAc...) serine glycosylation occurs at Ser-148. Thr-149 carries an O-linked (GalNAc...) threonine glycan. Ser-150 is a glycosylation site (O-linked (GalNAc...) serine). Thr-151 and Thr-153 each carry an O-linked (GalNAc...) threonine glycan. 4 O-linked (GalNAc...) serine glycosylation sites follow: Ser-157, Ser-160, Ser-161, and Ser-169.

This sequence belongs to the glycoprotein hormones subunit beta family. As to quaternary structure, heterodimer of a common alpha chain and a unique beta chain which confers biological specificity to thyrotropin, lutropin, follitropin and gonadotropin. Post-translationally, microheterogeneity at Asn-33. O-glycosylation appears to be responsible for the beta subunit contribution to the difference in LH-receptor binding activity between LSH-B and CG-B.

Its subcellular location is the secreted. Its function is as follows. Promotes spermatogenesis and ovulation by stimulating the testes and ovaries to synthesize steroids. This is Lutropin/choriogonadotropin subunit beta (LHB) from Equus caballus (Horse).